We begin with the raw amino-acid sequence, 132 residues long: Small ribosomal subunit protein eS12 (132 aa).

It belongs to the eukaryotic ribosomal protein eS12 family.

In Oreochromis niloticus (Nile tilapia), this protein is Small ribosomal subunit protein eS12 (rps12).